Here is a 416-residue protein sequence, read N- to C-terminus: RNA polymerase sigma-C factor (416 aa).

The short motif at Asp-205–Val-218 is the Polymerase core binding element. The segment at residues Leu-374 to Ser-393 is a DNA-binding region (H-T-H motif).

The protein belongs to the sigma-70 factor family.

Its function is as follows. Sigma factors are initiation factors that promote the attachment of RNA polymerase to specific initiation sites and are then released. This Nostoc sp. (strain PCC 7120 / SAG 25.82 / UTEX 2576) protein is RNA polymerase sigma-C factor (sigC).